The sequence spans 315 residues: Methionyl-tRNA formyltransferase (315 aa).

114–117 contacts (6S)-5,6,7,8-tetrahydrofolate; sequence SLLP.

The protein belongs to the Fmt family.

The catalysed reaction is L-methionyl-tRNA(fMet) + (6R)-10-formyltetrahydrofolate = N-formyl-L-methionyl-tRNA(fMet) + (6S)-5,6,7,8-tetrahydrofolate + H(+). Attaches a formyl group to the free amino group of methionyl-tRNA(fMet). The formyl group appears to play a dual role in the initiator identity of N-formylmethionyl-tRNA by promoting its recognition by IF2 and preventing the misappropriation of this tRNA by the elongation apparatus. In Corynebacterium efficiens (strain DSM 44549 / YS-314 / AJ 12310 / JCM 11189 / NBRC 100395), this protein is Methionyl-tRNA formyltransferase.